The primary structure comprises 307 residues: Methionyl-tRNA formyltransferase (307 aa).

Residue 108–111 coordinates (6S)-5,6,7,8-tetrahydrofolate; the sequence is SLLP.

Belongs to the Fmt family.

The enzyme catalyses L-methionyl-tRNA(fMet) + (6R)-10-formyltetrahydrofolate = N-formyl-L-methionyl-tRNA(fMet) + (6S)-5,6,7,8-tetrahydrofolate + H(+). Attaches a formyl group to the free amino group of methionyl-tRNA(fMet). The formyl group appears to play a dual role in the initiator identity of N-formylmethionyl-tRNA by promoting its recognition by IF2 and preventing the misappropriation of this tRNA by the elongation apparatus. This chain is Methionyl-tRNA formyltransferase, found in Xanthomonas euvesicatoria pv. vesicatoria (strain 85-10) (Xanthomonas campestris pv. vesicatoria).